The primary structure comprises 508 residues: GMP synthase [glutamine-hydrolyzing] (508 aa).

The region spanning 1–189 (MILVLDFGSQ…ALLVCGCEKT (189 aa)) is the Glutamine amidotransferase type-1 domain. Cys78 acts as the Nucleophile in catalysis. Residues His163 and Glu165 contribute to the active site. The GMPS ATP-PPase domain occupies 190-383 (WGMQHFAQRE…LGVSQDFLMH (194 aa)). ATP is bound at residue 217 to 223 (SGGVDST).

Homodimer.

It carries out the reaction XMP + L-glutamine + ATP + H2O = GMP + L-glutamate + AMP + diphosphate + 2 H(+). Its pathway is purine metabolism; GMP biosynthesis; GMP from XMP (L-Gln route): step 1/1. Catalyzes the synthesis of GMP from XMP. The chain is GMP synthase [glutamine-hydrolyzing] from Helicobacter pylori (strain G27).